The primary structure comprises 151 residues: Ribosome maturation factor RimP (151 aa).

It belongs to the RimP family.

The protein localises to the cytoplasm. Its function is as follows. Required for maturation of 30S ribosomal subunits. In Vibrio cholerae serotype O1 (strain ATCC 39541 / Classical Ogawa 395 / O395), this protein is Ribosome maturation factor RimP.